The sequence spans 265 residues: Hydroxyethylthiazole kinase (265 aa).

Methionine 36 provides a ligand contact to substrate. The ATP site is built by lysine 112 and serine 160. Residue glycine 187 coordinates substrate.

It belongs to the Thz kinase family. It depends on Mg(2+) as a cofactor.

It catalyses the reaction 5-(2-hydroxyethyl)-4-methylthiazole + ATP = 4-methyl-5-(2-phosphooxyethyl)-thiazole + ADP + H(+). It functions in the pathway cofactor biosynthesis; thiamine diphosphate biosynthesis; 4-methyl-5-(2-phosphoethyl)-thiazole from 5-(2-hydroxyethyl)-4-methylthiazole: step 1/1. In terms of biological role, catalyzes the phosphorylation of the hydroxyl group of 4-methyl-5-beta-hydroxyethylthiazole (THZ). The sequence is that of Hydroxyethylthiazole kinase from Clostridium perfringens (strain ATCC 13124 / DSM 756 / JCM 1290 / NCIMB 6125 / NCTC 8237 / Type A).